The primary structure comprises 1237 residues: Cilia- and flagella-associated protein 61 (1237 aa).

A disordered region spans residues 278–301 (QDLSVRRSQDAELRSSSQGSQKIV). Positions 281 to 290 (SVRRSQDAEL) are enriched in basic and acidic residues.

Component of axonemal radial spokes, the protein complexes that link the outer microtubule doublets with the central pair of microtubules. Interacts with CFAP91/MAATS1, ODAD2/ARMC4, RSPH3A, ROPN1, ROPN1L and RSPH9. Interacts with DYNLT1, DYNC1I2 and TUBB3. Interacts with WDR35, IFT22 and IFT81.

The protein localises to the cytoplasm. It localises to the cytoskeleton. Its subcellular location is the flagellum axoneme. Its function is as follows. Involved in sperm flagellum assembly. Plays an essential role in the formation of the radial spokes in flagellum axoneme. The chain is Cilia- and flagella-associated protein 61 from Homo sapiens (Human).